A 308-amino-acid chain; its full sequence is uncharacterized protein (308 aa).

Residues 1-28 (MILMKKFEIILFLFIAVLIFVFGYFVGA) form the signal peptide.

This is an uncharacterized protein from Methanocaldococcus jannaschii (strain ATCC 43067 / DSM 2661 / JAL-1 / JCM 10045 / NBRC 100440) (Methanococcus jannaschii).